Consider the following 266-residue polypeptide: UPF0294 protein YafD (266 aa).

The protein belongs to the UPF0294 family.

It is found in the cytoplasm. The sequence is that of UPF0294 protein YafD from Salmonella newport (strain SL254).